The sequence spans 290 residues: ATP synthase gamma chain (290 aa).

It belongs to the ATPase gamma chain family. As to quaternary structure, F-type ATPases have 2 components, CF(1) - the catalytic core - and CF(0) - the membrane proton channel. CF(1) has five subunits: alpha(3), beta(3), gamma(1), delta(1), epsilon(1). CF(0) has three main subunits: a, b and c.

The protein resides in the cell inner membrane. In terms of biological role, produces ATP from ADP in the presence of a proton gradient across the membrane. The gamma chain is believed to be important in regulating ATPase activity and the flow of protons through the CF(0) complex. The chain is ATP synthase gamma chain from Anaeromyxobacter sp. (strain K).